The sequence spans 1218 residues: NACHT, LRR and PYD domains-containing protein 1a allele 3 (1218 aa).

The segment covering Met1–Thr29 has biased composition (polar residues). Disordered stretches follow at residues Met1 to Gln44 and Glu71 to Glu91. Positions Arg77–Leu87 are enriched in basic residues. One can recognise an NACHT domain in the interval Gln175–Leu484. Gly181 to Ser188 contributes to the ATP binding site. LRR repeat units lie at residues Lys343–Cys364, Asn673–Cys693, and Arg730–Cys750. Residues Thr799–Lys815 are compositionally biased toward polar residues. A disordered region spans residues Thr799 to Val842. Residues Phe835–Phe968 are ZU5. One can recognise an FIIND domain in the interval Phe835–Ser1118. A UPA region spans residues Ser969 to Ser1118. The CARD domain maps to Asp1122–Ser1211.

Belongs to the NLRP family. In terms of assembly, interacts (via LRR repeats) with BCL2 and BCL2L1 (via the loop between motifs BH4 and BH3). Interacts with NOD2; this interaction is enhanced in the presence of muramyl dipeptide (MDP) and increases IL1B release. Interacts with EIF2AK2/PKR; this interaction requires EIF2AK2 activity, is accompanied by EIF2AK2 autophosphorylation and promotes inflammasome assembly in response to danger-associated signals. Interacts with MEFV; this interaction targets Nlrp1a to degradation by autophagy, hence preventing excessive IL1B- and IL18-mediated inflammation. Interacts with DPP9; leading to inhibit activation of the inflammasome. DPP9 acts via formation of a ternary complex, composed of a DPP9 homodimer, one full-length NLRP1 protein, and one cleaved C-terminus of Nlrp1a (NACHT, LRR and PYD domains-containing protein 1a, C-terminus). Interacts with DPP8; leading to inhibit activation of the inflammasome, probably via formation of a ternary complex with DPP8. As to quaternary structure, interacts with the C-terminal part of Nlrp1a (NACHT, LRR and PYD domains-containing protein 1a, C-terminus) in absence of pathogens and other damage-associated signals. Interacts with the N-terminal part of Nlrp1a (NACHT, LRR and PYD domains-containing protein 1a, N-terminus) in absence of pathogens and other damage-associated signals. Homomultimer; forms the Nlrp1a inflammasome polymeric complex, a filament composed of homopolymers of this form in response to pathogens and other damage-associated signals. The Nlrp1a inflammasome polymeric complex directly recruits pro-caspase-1 (proCASP1) independently of PYCARD/ASC. Interacts (via CARD domain) with CASP1 (via CARD domain); leading to CASP1 activation. In terms of processing, autocatalytically cleaved. Autocatalytic cleavage in FIIND region occurs constitutively, prior to activation signals, and is required for inflammasome activity (IL1B release), possibly by facilitating CASP1 binding. Both N- and C-terminal parts remain associated non-covalently. Post-translationally, ubiquitinated in response to pathogen-associated signals, leading to its degradation by the proteasome and subsequent release of the cleaved C-terminal part of the protein (NACHT, LRR and PYD domains-containing protein 1a, C-terminus), which polymerizes and forms the Nlrp1a inflammasome.

It is found in the cytoplasm. The protein resides in the cytosol. It localises to the nucleus. The protein localises to the inflammasome. Activated by pathogens and other damage-associated signals: activation promotes ubiquitination and degradation of the N-terminal part, releasing the cleaved C-terminal part of the protein (NACHT, LRR and PYD domains-containing protein 1a, C-terminus), which polymerizes and forms the Nlrp1a inflammasome. Nlrp1a inflammasome is inhibited by DPP8 and DPP9, which sequester the C-terminal fragment of Nlrp1a (NACHT, LRR and PYD domains-containing protein 1a, C-terminus) in a ternary complex, thereby preventing Nlrp1a oligomerization and activation. Nlrp1a inflammasome is strongly activated by Val-boroPro (Talabostat, PT-100), an inhibitor of dipeptidyl peptidases DPP8 and DPP9. Val-boroPro relieves inhibition of DPP8 and/or DPP9 by promoting disruption of the ternary complex, releasing its C-terminal part from autoinhibition. Not activated by cleavage by B.anthracis lethal toxin (LT) endopeptidase. Acts as the sensor component of the Nlrp1a inflammasome, which mediates inflammasome activation in response to various pathogen-associated signals, leading to subsequent pyroptosis. Inflammasomes are supramolecular complexes that assemble in the cytosol in response to pathogens and other damage-associated signals and play critical roles in innate immunity and inflammation. Acts as a recognition receptor (PRR): recognizes specific pathogens and other damage-associated signals, such as Val-boroPro inhibitor, and mediates the formation of the inflammasome polymeric complex. In response to pathogen-associated signals, the N-terminal part of Nlrp1a is degraded by the proteasome, releasing the cleaved C-terminal part of the protein (NACHT, LRR and PYD domains-containing protein 1a, C-terminus), which polymerizes to initiate the formation of the inflammasome complex: the inflammasome directly recruits pro-caspase-1 (proCASP1) independently of PYCARD/ASC and promotes caspase-1 (CASP1) activation, which subsequently cleaves and activates inflammatory cytokines IL1B and IL18 and gasdermin-D (GSDMD), leading to pyroptosis. In the absence of GSDMD expression, the Nlrp1a inflammasome is able to recruit and activate CASP8, leading to activation of gasdermin-E (GSDME). In terms of biological role, constitutes the precursor of the Nlrp1a inflammasome, which mediates autoproteolytic processing within the FIIND domain to generate the N-terminal and C-terminal parts, which are associated non-covalently in absence of pathogens and other damage-associated signals. Its function is as follows. Regulatory part that prevents formation of the Nlrp1a inflammasome: in absence of pathogens and other damage-associated signals, interacts with the C-terminal part of Nlrp1a (NACHT, LRR and PYD domains-containing protein 1a, C-terminus), preventing activation of the Nlrp1a inflammasome. In response to pathogen-associated signals, this part is ubiquitinated by the N-end rule pathway and degraded by the proteasome, releasing the cleaved C-terminal part of the protein, which polymerizes and forms the Nlrp1a inflammasome. Functionally, constitutes the active part of the Nlrp1a inflammasome. In absence of pathogens and other damage-associated signals, interacts with the N-terminal part of Nlrp1a (NACHT, LRR and PYD domains-containing protein 1a, N-terminus), preventing activation of the Nlrp1a inflammasome. In response to pathogen-associated signals, the N-terminal part of Nlrp1a is degraded by the proteasome, releasing this form, which polymerizes to form the Nlrp1a inflammasome complex: the Nlrp1a inflammasome complex then directly recruits pro-caspase-1 (proCASP1) and promotes caspase-1 (CASP1) activation, leading to gasdermin-D (GSDMD) cleavage and subsequent pyroptosis. In Rattus norvegicus (Rat), this protein is NACHT, LRR and PYD domains-containing protein 1a allele 3.